The following is a 206-amino-acid chain: UPF0328 protein ECU01_0050/ECU01_1560 (206 aa).

Disordered stretches follow at residues 1–153 and 179–206; these read MPRP…HSHT and GRLHGSPTKGAQTAQQAQPHPPKQLATL. Residues 74 to 96 are compositionally biased toward basic and acidic residues; it reads HTEGCHTHEANPEPNTKHTETES. Polar residues-rich tracts occupy residues 97–120 and 132–148; these read PKPQTSTQHHTPITIPSSLLSQNT and SRPSTIPANTYQPQSPH.

The protein belongs to the UPF0328 family.

In Encephalitozoon cuniculi (strain GB-M1) (Microsporidian parasite), this protein is UPF0328 protein ECU01_0050/ECU01_1560.